The primary structure comprises 960 residues: Leucine--tRNA ligase (960 aa).

Positions 71 to 82 (PYPSGAGLHVGH) match the 'HIGH' region motif. Residues 729–733 (KMGKS) carry the 'KMSKS' region motif. Lysine 732 is an ATP binding site.

The protein belongs to the class-I aminoacyl-tRNA synthetase family.

The protein resides in the cytoplasm. The enzyme catalyses tRNA(Leu) + L-leucine + ATP = L-leucyl-tRNA(Leu) + AMP + diphosphate. The chain is Leucine--tRNA ligase from Corynebacterium diphtheriae (strain ATCC 700971 / NCTC 13129 / Biotype gravis).